Consider the following 184-residue polypeptide: Fruit protein pKIWI501 (184 aa).

A disordered region spans residues 1–184; the sequence is MATVEVTPAV…TEVPVDKTEE (184 aa). Composition is skewed to low complexity over residues 25–36 and 53–65; these read PQEPQPEAAVAA and PEAV…PAAT. The span at 72–92 shows a compositional bias: acidic residues; that stretch reads EVAEAEEEVVEEPQEVPEEPV. A compositionally biased stretch (basic and acidic residues) spans 96-119; it reads AAKEVEATEGKAEPTGEMKDKTPE. Residues 120 to 156 show a composition bias toward low complexity; the sequence is ATDAPEAPAAAEEPTDAPEAPAVAEEPTNAPEAPAVG. The segment covering 159 to 168 has biased composition (basic and acidic residues); sequence PEAKEGKPDE.

This sequence to H.brasiliensis latex allergen Hev b 5.

The sequence is that of Fruit protein pKIWI501 from Actinidia deliciosa (Kiwi).